We begin with the raw amino-acid sequence, 1273 residues long: ABC transporter B family member 2 (1273 aa).

Residues 1–30 form the signal peptide; sequence MYISLIFFLSNHFPPLISIPIFIFLSFSSP. 7 helical membrane-spanning segments follow: residues 66–86, 91–111, 126–146, 209–229, 230–250, 305–325, and 345–365; these read FSFADFYDCVLMTLGSVGACI, VPIFFIFFGKLINIIGLAYLF, FVYLSVAILFSSWLEVACWMH, FIAGFAIGFTSVWQISLVTLS, IVPLIALAGGIYAFVAIGLIA, GLGLGSMHCVLFLSWALLVWF, and LNVVIAGLSLGQAAPDISAFV. Residues 77–366 form the ABC transmembrane type-1 1 domain; sequence MTLGSVGACI…AAPDISAFVR (290 aa). An ABC transporter 1 domain is found at 401–637; sequence IQFKDATFSY…PDGAYSSLLR (237 aa). 436-443 is an ATP binding site; it reads GGSGSGKS. N-linked (GlcNAc...) asparagine glycans are attached at residues N466 and N651. The 288-residue stretch at 710-997 folds into the ABC transmembrane type-1 2 domain; it reads GVCGTICAFI…TLALAPDLLK (288 aa). 2 consecutive transmembrane segments (helical) span residues 711-731 and 752-772; these read VCGTICAFIAGSQMPLFALGV and IAILFCCASVITLIVYTIEHI. N806 carries an N-linked (GlcNAc...) asparagine glycan. 3 helical membrane-spanning segments follow: residues 832–852, 934–954, and 975–995; these read ILLQNLGLVVTSFIIAFILNW, IAGLFYGVSQFFIFSSYGLAL, and FMVLIVTALAMGETLALAPDL. Positions 1030–1266 constitute an ABC transporter 2 domain; the sequence is IELKGVHFSY…KSGPYFKLIS (237 aa). Position 1065-1072 (1065-1072) interacts with ATP; that stretch reads GQSGSGKS. Residues N1217 and N1256 are each glycosylated (N-linked (GlcNAc...) asparagine).

It belongs to the ABC transporter superfamily. ABCB family. Multidrug resistance exporter (TC 3.A.1.201) subfamily. Interacts with 1-naphthylphthalamic acid (NPA).

The protein resides in the membrane. This Arabidopsis thaliana (Mouse-ear cress) protein is ABC transporter B family member 2 (ABCB2).